We begin with the raw amino-acid sequence, 273 residues long: Large ribosomal subunit protein uL2cz/uL2cy (273 aa).

Disordered stretches follow at residues 1–23 and 224–273; these read MAIH…SQVK and NPVD…RRRK.

Belongs to the universal ribosomal protein uL2 family. As to quaternary structure, part of the 50S ribosomal subunit.

Its subcellular location is the plastid. It is found in the chloroplast. This is Large ribosomal subunit protein uL2cz/uL2cy (rpl2-A) from Amborella trichopoda.